A 282-amino-acid polypeptide reads, in one-letter code: ATP synthase gamma chain (282 aa).

The protein belongs to the ATPase gamma chain family. As to quaternary structure, F-type ATPases have 2 components, CF(1) - the catalytic core - and CF(0) - the membrane proton channel. CF(1) has five subunits: alpha(3), beta(3), gamma(1), delta(1), epsilon(1). CF(0) has three main subunits: a, b and c.

Its subcellular location is the cell membrane. Produces ATP from ADP in the presence of a proton gradient across the membrane. The gamma chain is believed to be important in regulating ATPase activity and the flow of protons through the CF(0) complex. The polypeptide is ATP synthase gamma chain (Clostridium botulinum (strain ATCC 19397 / Type A)).